Here is a 260-residue protein sequence, read N- to C-terminus: Coiled-coil domain-containing protein 127 (260 aa).

Residues 76 to 139 (AVISEHRRAV…EKSRLQPLRN (64 aa)) adopt a coiled-coil conformation.

This is Coiled-coil domain-containing protein 127 (Ccdc127) from Mus musculus (Mouse).